Here is a 215-residue protein sequence, read N- to C-terminus: Adenylate kinase (215 aa).

Residue 10–15 (GTGKGT) coordinates ATP. The segment at 30-59 (STGHILRKISTKKTLFGEKIKNIINSGKLV) is NMP. AMP contacts are provided by residues Thr31, Arg36, 57–59 (KLV), 85–88 (GFPR), and Gln92. Positions 122–157 (TRTINPITGTIYNNVIQKNSELKNLKINTLKSRLDD) are LID. ATP contacts are provided by residues Arg123 and 132 to 133 (IY). AMP contacts are provided by Arg154 and Arg165. Asn198 lines the ATP pocket.

The protein belongs to the adenylate kinase family. Monomer.

The protein localises to the cytoplasm. The catalysed reaction is AMP + ATP = 2 ADP. The protein operates within purine metabolism; AMP biosynthesis via salvage pathway; AMP from ADP: step 1/1. In terms of biological role, catalyzes the reversible transfer of the terminal phosphate group between ATP and AMP. Plays an important role in cellular energy homeostasis and in adenine nucleotide metabolism. This Buchnera aphidicola subsp. Baizongia pistaciae (strain Bp) protein is Adenylate kinase.